The chain runs to 349 residues: Fructose-1,6-bisphosphatase class 1 (349 aa).

Mg(2+) is bound by residues Glu-113, Asp-135, Ile-137, and Asp-138. Residues 138–141 (DGSS), Asn-230, Tyr-258, and Lys-288 each bind substrate. Mg(2+) is bound at residue Glu-294.

The protein belongs to the FBPase class 1 family. As to quaternary structure, homotetramer. It depends on Mg(2+) as a cofactor.

It is found in the cytoplasm. It catalyses the reaction beta-D-fructose 1,6-bisphosphate + H2O = beta-D-fructose 6-phosphate + phosphate. Its pathway is carbohydrate biosynthesis; Calvin cycle. The chain is Fructose-1,6-bisphosphatase class 1 from Trichormus variabilis (strain ATCC 29413 / PCC 7937) (Anabaena variabilis).